Consider the following 64-residue polypeptide: Conotoxin Am1.1 (64 aa).

The N-terminal stretch at 1-22 (MSCLPVFVILLLLTASGPSVDA) is a signal peptide. A propeptide spanning residues 23-49 (RLKTKDDVPLSSFRDNAKSTLRRLQDK) is cleaved from the precursor. A 4-hydroxyproline; partial; in major form modification is found at Pro60.

This sequence belongs to the conotoxin T superfamily. In terms of processing, contains 2 disulfide bonds. In terms of tissue distribution, expressed by the venom duct.

It localises to the secreted. Functionally, probable toxin that inhibits ion channels. The protein is Conotoxin Am1.1 of Conus amadis (Amadis cone).